The sequence spans 402 residues: CCA-adding enzyme (402 aa).

2 residues coordinate ATP: G32 and R35. The CTP site is built by G32 and R35. Mg(2+)-binding residues include D45 and D47. Positions 116, 159, 162, 165, and 168 each coordinate ATP. Positions 116, 159, 162, 165, and 168 each coordinate CTP.

This sequence belongs to the tRNA nucleotidyltransferase/poly(A) polymerase family. Bacterial CCA-adding enzyme type 3 subfamily. As to quaternary structure, homodimer. The cofactor is Mg(2+).

It carries out the reaction a tRNA precursor + 2 CTP + ATP = a tRNA with a 3' CCA end + 3 diphosphate. It catalyses the reaction a tRNA with a 3' CCA end + 2 CTP + ATP = a tRNA with a 3' CCACCA end + 3 diphosphate. Its function is as follows. Catalyzes the addition and repair of the essential 3'-terminal CCA sequence in tRNAs without using a nucleic acid template. Adds these three nucleotides in the order of C, C, and A to the tRNA nucleotide-73, using CTP and ATP as substrates and producing inorganic pyrophosphate. tRNA 3'-terminal CCA addition is required both for tRNA processing and repair. Also involved in tRNA surveillance by mediating tandem CCA addition to generate a CCACCA at the 3' terminus of unstable tRNAs. While stable tRNAs receive only 3'-terminal CCA, unstable tRNAs are marked with CCACCA and rapidly degraded. The polypeptide is CCA-adding enzyme (Streptococcus pyogenes serotype M4 (strain MGAS10750)).